A 124-amino-acid polypeptide reads, in one-letter code: MRHYEIVFMVHPDQSEQVPGMIERYTGAIKAAGGTIHRLEDWGRRQLAYPIDKLHKAHYVLMNVEAEQSVIDELENNFRFNDAVIRNMIMRTKHAVTEASPMLKAREERPRREDVREEAEEAAE.

Positions 98 to 124 (EASPMLKAREERPRREDVREEAEEAAE) are disordered. Residues 104 to 115 (KAREERPRREDV) show a composition bias toward basic and acidic residues.

It belongs to the bacterial ribosomal protein bS6 family.

Functionally, binds together with bS18 to 16S ribosomal RNA. The polypeptide is Small ribosomal subunit protein bS6 (Tolumonas auensis (strain DSM 9187 / NBRC 110442 / TA 4)).